A 503-amino-acid polypeptide reads, in one-letter code: Aminoaldehyde dehydrogenase 1, peroxisomal (503 aa).

Na(+)-binding residues include Ile-28, Asp-99, and Leu-189. 238–245 (GSTMTGSK) is a binding site for NAD(+). Glu-260 acts as the Proton acceptor in catalysis. Residues Cys-294 and Glu-393 each contribute to the NAD(+) site. Catalysis depends on Cys-294, which acts as the Nucleophile.

The protein belongs to the aldehyde dehydrogenase family. As to expression, expressed in leaves, flowers and fruits.

The protein resides in the cytoplasm. The protein localises to the cytosol. The enzyme catalyses 4-aminobutanal + NAD(+) + H2O = 4-aminobutanoate + NADH + 2 H(+). The catalysed reaction is 3-aminopropanal + NAD(+) + H2O = beta-alanine + NADH + 2 H(+). Its pathway is amine and polyamine biosynthesis; betaine biosynthesis via choline pathway; betaine from betaine aldehyde: step 1/1. Its function is as follows. Dehydrogenase that catalyzes the oxidation of several aminoaldehydes. Metabolizes and detoxifies aldehyde products of polyamine degradation to non-toxic amino acids. Catalyzes the oxidation of 4-aminobutanal and 3-aminopropanal to 4-aminobutanoate and beta-alanine, respectively. This chain is Aminoaldehyde dehydrogenase 1, peroxisomal, found in Malus domestica (Apple).